The sequence spans 341 residues: Follistatin (341 aa).

Positions 1–29 (MLNERIQPGMIFLLTVSLCHFMEYRAVQA) are cleaved as a signal peptide. The 74-residue stretch at 30–103 (GNCWLQQSKN…TCENVDCGPG (74 aa)) folds into the TB domain. Cystine bridges form between Cys32–Cys55, Cys42–Cys88, Cys56–Cys91, Cys95–Cys106, Cys100–Cys116, Cys118–Cys150, Cys122–Cys143, and Cys132–Cys164. Asn72 carries an N-linked (GlcNAc...) asparagine glycan. The region spanning 94–117 (TCENVDCGPGKKCKMNKKNKPRCV) is the Follistatin-like 1 domain. Kazal-like domains are found at residues 100 to 166 (CGPG…KCKK), 186 to 241 (NAYC…KCIK), and 264 to 318 (RGRC…SCNS). An N-linked (GlcNAc...) asparagine glycan is attached at Asn124. Positions 167–190 (TCRDVLCPGSSSCVVDQTNNAYCV) constitute a Follistatin-like 2 domain. Disulfide bonds link Cys192-Cys225, Cys196-Cys218, and Cys207-Cys239. In terms of domain architecture, Follistatin-like 3 spans 244 to 268 (SCEDIQCSAGKKCLWDSRVGRGRCA). 3 cysteine pairs are disulfide-bonded: Cys270–Cys302, Cys274–Cys295, and Cys284–Cys316. N-linked (GlcNAc...) asparagine glycosylation occurs at Asn288. Residues 321 to 333 (EDTEEEEEEEEPD) show a composition bias toward acidic residues. Residues 321–341 (EDTEEEEEEEEPDYSFVISSW) form a disordered region.

In terms of assembly, monomer. As to expression, spemann organizer and notochord.

Its subcellular location is the secreted. Binds directly to activin and functions as an activin antagonist which plays a role in neural induction. The short isoform is a more potent inhibitor of activin than the long isoform. Specific inhibitor of the biosynthesis and secretion of pituitary follicle stimulating hormone (FSH). In Xenopus laevis (African clawed frog), this protein is Follistatin (fst).